The sequence spans 311 residues: Energy-coupling factor transporter ATP-binding protein EcfA (311 aa).

Positions 2 to 237 constitute an ABC transporter domain; sequence IELRDLSYSY…AELIRRASLR (236 aa). An ATP-binding site is contributed by 35-42; the sequence is GPNGAGKS.

The protein belongs to the ABC transporter superfamily. Energy-coupling factor EcfA family. As to quaternary structure, forms a stable energy-coupling factor (ECF) transporter complex composed of 2 membrane-embedded substrate-binding proteins (S component), 2 ATP-binding proteins (A component) and 2 transmembrane proteins (T component).

It localises to the cell membrane. In terms of biological role, ATP-binding (A) component of a common energy-coupling factor (ECF) ABC-transporter complex. Unlike classic ABC transporters this ECF transporter provides the energy necessary to transport a number of different substrates. This is Energy-coupling factor transporter ATP-binding protein EcfA from Methanothermobacter thermautotrophicus (strain ATCC 29096 / DSM 1053 / JCM 10044 / NBRC 100330 / Delta H) (Methanobacterium thermoautotrophicum).